A 359-amino-acid polypeptide reads, in one-letter code: UDP-2-acetamido-2-deoxy-3-oxo-D-glucuronate aminotransferase (359 aa).

UDP-2-acetamido-2-deoxy-alpha-D-ribo-hex-3-uluronate-binding residues include G29, Y31, and S184. N6-(pyridoxal phosphate)lysine is present on K185. R229, H308, and Y309 together coordinate UDP-2-acetamido-2-deoxy-alpha-D-ribo-hex-3-uluronate.

This sequence belongs to the DegT/DnrJ/EryC1 family. As to quaternary structure, homodimer. Pyridoxal 5'-phosphate is required as a cofactor.

It catalyses the reaction UDP-2-acetamido-2-deoxy-alpha-D-ribo-hex-3-uluronate + L-glutamate = UDP-2-acetamido-3-amino-2,3-dideoxy-alpha-D-glucuronate + 2-oxoglutarate. The protein operates within bacterial outer membrane biogenesis; LPS O-antigen biosynthesis. Plays a role in the biosynthesis of B-band O antigen for serotype O5. Catalyzes the amination of UDP-2-acetamido-2-deoxy-3-oxo-D-glucuronic acid (UDP-3-oxo-D-GlcNAcA) to UDP-2-acetamido-3-amino-2,3-dideoxy-D-glucuronic acid (UDP-GlcNAc3NA), using L-glutamate as the preferred amine donor. The chain is UDP-2-acetamido-2-deoxy-3-oxo-D-glucuronate aminotransferase from Pseudomonas aeruginosa (strain ATCC 15692 / DSM 22644 / CIP 104116 / JCM 14847 / LMG 12228 / 1C / PRS 101 / PAO1).